A 263-amino-acid polypeptide reads, in one-letter code: Small ribosomal subunit protein eS4 (263 aa).

Residues 42 to 104 (LPLIIFLRNR…TGENFRLIYD (63 aa)) enclose the S4 RNA-binding domain.

This sequence belongs to the eukaryotic ribosomal protein eS4 family.

The chain is Small ribosomal subunit protein eS4 (RPS4) from Bos taurus (Bovine).